Reading from the N-terminus, the 259-residue chain is Probable UMP-CMP kinase 2 (259 aa).

63-68 contacts ATP; that stretch reads GSGKGT. Residues 83–112 form an NMP region; sequence SAGDLLRREIAMHTENGAMILNLIKDGKIV. Residues Arg-89, 110–112, and 137–140 contribute to the a ribonucleoside 5'-phosphate site; these read KIV and GFPR. Asn-144 is a binding site for CMP. The LID stretch occupies residues 175 to 183; sequence NRNQGRIDD. Position 176 (Arg-176) interacts with ATP. A ribonucleoside 5'-phosphate-binding residues include Arg-180 and Arg-191. Gly-219 is an ATP binding site.

It belongs to the adenylate kinase family. UMP-CMP kinase subfamily. As to quaternary structure, monomer. The cofactor is Mg(2+).

It localises to the cytoplasm. The protein localises to the nucleus. The enzyme catalyses CMP + ATP = CDP + ADP. The catalysed reaction is dCMP + ATP = dCDP + ADP. It carries out the reaction UMP + ATP = UDP + ADP. Catalyzes the phosphorylation of pyrimidine nucleoside monophosphates at the expense of ATP. Plays an important role in de novo pyrimidine nucleotide biosynthesis. Has preference for UMP and CMP as phosphate acceptors. This Arabidopsis thaliana (Mouse-ear cress) protein is Probable UMP-CMP kinase 2 (UMK2).